The sequence spans 256 residues: Large ribosomal subunit protein bL28m (256 aa).

A mitochondrion-targeting transit peptide spans 1–55 (MPLHKYPVWLWKRLQLREGICSRLPGHYLRSLEEERTPTPVHYRPHGAKFKINPK).

The protein belongs to the bacterial ribosomal protein bL28 family. Component of the mitochondrial large ribosomal subunit (mt-LSU). Mature mammalian 55S mitochondrial ribosomes consist of a small (28S) and a large (39S) subunit. The 28S small subunit contains a 12S ribosomal RNA (12S mt-rRNA) and 30 different proteins. The 39S large subunit contains a 16S rRNA (16S mt-rRNA), a copy of mitochondrial valine transfer RNA (mt-tRNA(Val)), which plays an integral structural role, and 52 different proteins. Interacts with OXA1L. Found in a variety of normal tissues including spleen, testes, thymus, liver, kidney, brain, adrenal, lung and retinal tissue.

Its subcellular location is the mitochondrion. This chain is Large ribosomal subunit protein bL28m (MRPL28), found in Homo sapiens (Human).